Consider the following 512-residue polypeptide: ATP synthase subunit alpha (512 aa).

169–176 (GDRQTGKT) contributes to the ATP binding site.

This sequence belongs to the ATPase alpha/beta chains family. As to quaternary structure, F-type ATPases have 2 components, CF(1) - the catalytic core - and CF(0) - the membrane proton channel. CF(1) has five subunits: alpha(3), beta(3), gamma(1), delta(1), epsilon(1). CF(0) has three main subunits: a(1), b(2) and c(9-12). The alpha and beta chains form an alternating ring which encloses part of the gamma chain. CF(1) is attached to CF(0) by a central stalk formed by the gamma and epsilon chains, while a peripheral stalk is formed by the delta and b chains.

It is found in the cell inner membrane. It catalyses the reaction ATP + H2O + 4 H(+)(in) = ADP + phosphate + 5 H(+)(out). In terms of biological role, produces ATP from ADP in the presence of a proton gradient across the membrane. The alpha chain is a regulatory subunit. In Rickettsia bellii (strain OSU 85-389), this protein is ATP synthase subunit alpha.